We begin with the raw amino-acid sequence, 178 residues long: Peptide methionine sulfoxide reductase MsrA (178 aa).

Cys-14 is an active-site residue.

It belongs to the MsrA Met sulfoxide reductase family.

The catalysed reaction is L-methionyl-[protein] + [thioredoxin]-disulfide + H2O = L-methionyl-(S)-S-oxide-[protein] + [thioredoxin]-dithiol. It carries out the reaction [thioredoxin]-disulfide + L-methionine + H2O = L-methionine (S)-S-oxide + [thioredoxin]-dithiol. Has an important function as a repair enzyme for proteins that have been inactivated by oxidation. Catalyzes the reversible oxidation-reduction of methionine sulfoxide in proteins to methionine. The chain is Peptide methionine sulfoxide reductase MsrA from Bacillus pumilus (strain SAFR-032).